A 245-amino-acid polypeptide reads, in one-letter code: Ribosome maturation factor RimP (245 aa).

The protein belongs to the RimP family.

It localises to the cytoplasm. Functionally, required for maturation of 30S ribosomal subunits. This Verminephrobacter eiseniae (strain EF01-2) protein is Ribosome maturation factor RimP.